The following is a 284-amino-acid chain: Avenin-like b11 (284 aa).

The N-terminal stretch at 1–18 is a signal peptide; sequence MKVFILALLALTATTAIA.

The protein belongs to the prolamin family. Post-translationally, contains disulfide bonds.

Functionally, seed storage protein. Might be integrated via inter-chain disulfide bonds within the glutenin polymer. This is Avenin-like b11 from Triticum aestivum (Wheat).